Reading from the N-terminus, the 355-residue chain is Proto-oncogene Wnt-3 (355 aa).

An N-terminal signal peptide occupies residues 1–21 (MEPHLLGLLLGLLLGGTRVLA). Disulfide bonds link C80/C91, C131/C139, C141/C158, C206/C220, C208/C215, C284/C315, C300/C310, C314/C354, C330/C345, C332/C342, and C337/C338. The N-linked (GlcNAc...) asparagine glycan is linked to N90. The O-palmitoleoyl serine; by PORCN moiety is linked to residue S212. N-linked (GlcNAc...) asparagine glycosylation is present at N301.

Belongs to the Wnt family. As to quaternary structure, forms a soluble 1:1 complex with AFM; this prevents oligomerization and is required for prolonged biological activity. The complex with AFM may represent the physiological form in body fluids. Interacts with PORCN. Interacts with WLS. In terms of processing, palmitoleoylation is required for efficient binding to frizzled receptors. Depalmitoleoylation leads to Wnt signaling pathway inhibition.

The protein localises to the secreted. It localises to the extracellular space. It is found in the extracellular matrix. Its function is as follows. Ligand for members of the frizzled family of seven transmembrane receptors. Functions in the canonical Wnt signaling pathway that results in activation of transcription factors of the TCF/LEF family. Required for normal gastrulation, formation of the primitive streak, and for the formation of the mesoderm during early embryogenesis. Required for normal formation of the apical ectodermal ridge. Required for normal embryonic development, and especially for limb development. This is Proto-oncogene Wnt-3 (WNT3) from Homo sapiens (Human).